Reading from the N-terminus, the 78-residue chain is uncharacterized protein (78 aa).

The interval 51-78 (GGKWDGGGSGGKWNGGGGSGGGSWKKWN) is disordered.

This is an uncharacterized protein from Dictyostelium discoideum (Social amoeba).